Consider the following 376-residue polypeptide: Fructose-1,6-bisphosphate aldolase/phosphatase (376 aa).

The active-site Proton acceptor; for FBP phosphatase activity is the Asp11. Residues Asp11, His18, Asp49, and Asp50 each coordinate Mg(2+). Beta-D-fructose 1,6-bisphosphate is bound at residue His18. His18 lines the dihydroxyacetone phosphate pocket. Residue Tyr87 coordinates beta-D-fructose 1,6-bisphosphate. Gln91 lines the Mg(2+) pocket. Residue 100 to 101 (GN) participates in beta-D-fructose 1,6-bisphosphate binding. Residue Asp128 coordinates Mg(2+). Lys129 serves as a coordination point for beta-D-fructose 1,6-bisphosphate. Residue Lys129 coordinates dihydroxyacetone phosphate. The active-site Proton donor/acceptor; for FBP aldolase activity is Tyr224. The Mg(2+) site is built by Lys227, Asp228, and Asp229. The active-site Schiff-base intermediate with DHAP; for FBP aldolase activity is the Lys227. Residues 237-238 (QK), Arg261, and Tyr342 each bind beta-D-fructose 1,6-bisphosphate. Arg261 contributes to the dihydroxyacetone phosphate binding site. Positions 357-376 (MVPLKDSGPAGTGRAYEDPD) are disordered.

This sequence belongs to the FBP aldolase/phosphatase family. Homooctamer; dimer of tetramers. Mg(2+) is required as a cofactor.

It catalyses the reaction beta-D-fructose 1,6-bisphosphate + H2O = beta-D-fructose 6-phosphate + phosphate. It carries out the reaction beta-D-fructose 1,6-bisphosphate = D-glyceraldehyde 3-phosphate + dihydroxyacetone phosphate. Its pathway is carbohydrate biosynthesis; gluconeogenesis. In terms of biological role, catalyzes two subsequent steps in gluconeogenesis: the aldol condensation of dihydroxyacetone phosphate (DHAP) and glyceraldehyde-3-phosphate (GA3P) to fructose-1,6-bisphosphate (FBP), and the dephosphorylation of FBP to fructose-6-phosphate (F6P). This Cenarchaeum symbiosum (strain A) protein is Fructose-1,6-bisphosphate aldolase/phosphatase.